A 261-amino-acid polypeptide reads, in one-letter code: MIHSKKLTLGICLVLLIILIGGCVIMTKTNGRNAQIKENFNKTLSVYLTKNLDDFYDKEGFRDQEFDKRDKGTWIIYSEMVIEPKGKNMESRGMVLYINRNTRTTKGNFIVTEITEDSKGYSRSKEKKYPVKMENNRIIPTKPIPDDKLKKEIENFKFFVQYGNFKDFKDYKNGDISYNPNVPSYSAKYQLNNDDYNVQQLRKRYHIPTKQAPELKLKGSGNLKGSSVGSKDLEFTFVENQEENIYFSDSVEFTPSEDDKS.

Residues 1-22 form the signal peptide; that stretch reads MIHSKKLTLGICLVLLIILIGG. Residue cysteine 23 is the site of N-palmitoyl cysteine attachment. Cysteine 23 carries the S-diacylglycerol cysteine lipid modification.

The protein belongs to the staphylococcal tandem lipoprotein family.

It is found in the cell membrane. This is an uncharacterized protein from Staphylococcus aureus (strain NCTC 8325 / PS 47).